Here is a 365-residue protein sequence, read N- to C-terminus: tRNA (guanine(6)-N2)-methyltransferase (365 aa).

Residues 69 to 182 (NENSRLLHRV…KDVFFLGIDT (114 aa)) form the THUMP domain. S-adenosyl-L-methionine is bound by residues 198-202 (HPAHL), 228-230 (SGT), E248, 276-277 (DA), and N293.

This sequence belongs to the methyltransferase superfamily. Monomer in solution.

The protein resides in the cytoplasm. It carries out the reaction guanosine(6) in tRNA + S-adenosyl-L-methionine = N(2)-methylguanosine(6) in tRNA + S-adenosyl-L-homocysteine + H(+). S-adenosyl-L-methionine-dependent methyltransferase that catalyzes the methylation of the guanosine nucleotide at position 6 (m2G6) in tRNA(Phe). The sequence is that of tRNA (guanine(6)-N2)-methyltransferase from Pyrococcus furiosus (strain ATCC 43587 / DSM 3638 / JCM 8422 / Vc1).